Here is a 358-residue protein sequence, read N- to C-terminus: Photosystem II protein D1 (358 aa).

A run of 3 helical transmembrane segments spans residues Tyr-28–Ile-45, His-117–Leu-132, and Trp-141–Ala-155. Position 117 (His-117) interacts with chlorophyll a. Trp-125 contacts pheophytin a. [CaMn4O5] cluster is bound by residues Asp-169 and Glu-188. A helical membrane pass occupies residues Phe-196–Leu-217. His-197 serves as a coordination point for chlorophyll a. Residues His-214 and Ser-263 to Phe-264 each bind a quinone. His-214 lines the Fe cation pocket. Residue His-271 participates in Fe cation binding. A helical transmembrane segment spans residues Phe-273–Leu-287. Residues His-331, Glu-332, Asp-341, and Ala-343 each contribute to the [CaMn4O5] cluster site. Residues Ala-344–Gly-358 constitute a propeptide that is removed on maturation.

The protein belongs to the reaction center PufL/M/PsbA/D family. As to quaternary structure, PSII is composed of 1 copy each of membrane proteins PsbA, PsbB, PsbC, PsbD, PsbE, PsbF, PsbH, PsbI, PsbJ, PsbK, PsbL, PsbM, PsbT, PsbX, PsbY, Psb30/Ycf12, peripheral proteins PsbO, CyanoQ (PsbQ), PsbU, PsbV and a large number of cofactors. It forms dimeric complexes. The D1/D2 heterodimer binds P680, chlorophylls that are the primary electron donor of PSII, and subsequent electron acceptors. It shares a non-heme iron and each subunit binds pheophytin, quinone, additional chlorophylls, carotenoids and lipids. D1 provides most of the ligands for the Mn4-Ca-O5 cluster of the oxygen-evolving complex (OEC). There is also a Cl(-1) ion associated with D1 and D2, which is required for oxygen evolution. The PSII complex binds additional chlorophylls, carotenoids and specific lipids. serves as cofactor. In terms of processing, tyr-160 forms a radical intermediate that is referred to as redox-active TyrZ, YZ or Y-Z. C-terminally processed by CtpA; processing is essential to allow assembly of the oxygen-evolving complex and thus photosynthetic growth.

The protein resides in the cellular thylakoid membrane. The enzyme catalyses 2 a plastoquinone + 4 hnu + 2 H2O = 2 a plastoquinol + O2. In terms of biological role, photosystem II (PSII) is a light-driven water:plastoquinone oxidoreductase that uses light energy to abstract electrons from H(2)O, generating O(2) and a proton gradient subsequently used for ATP formation. It consists of a core antenna complex that captures photons, and an electron transfer chain that converts photonic excitation into a charge separation. The D1/D2 (PsbA/PsbD) reaction center heterodimer binds P680, the primary electron donor of PSII as well as several subsequent electron acceptors. The sequence is that of Photosystem II protein D1 from Prochlorococcus marinus (strain MIT 9313).